The sequence spans 249 residues: Syntaxin-10 (249 aa).

The residue at position 2 (serine 2) is an N-acetylserine. Residues 2-228 (SLEDPFFVVR…VSHMTSDRRQ (227 aa)) lie on the Cytoplasmic side of the membrane. A coiled-coil region spans residues 41–69 (EELDWTTNELRNGLRSIEWDLEDLEETIG). Phosphoserine is present on serine 108. The residue at position 110 (threonine 110) is a Phosphothreonine. A phosphoserine mark is found at serine 134, serine 140, and serine 143. The t-SNARE coiled-coil homology domain occupies 157–219 (QLIMDEQDQQ…DGVLRKLAKV (63 aa)). Residues 229-249 (WCAIAVLVGVLLLVLILLFSL) form a helical; Anchor for type IV membrane protein membrane-spanning segment.

The protein belongs to the syntaxin family. As to quaternary structure, interacts with VPS52. In terms of tissue distribution, expressed at high levels in heart, skeletal muscle and pancreas.

The protein resides in the golgi apparatus membrane. SNARE involved in vesicular transport from the late endosomes to the trans-Golgi network. In Homo sapiens (Human), this protein is Syntaxin-10 (STX10).